The chain runs to 345 residues: UDP-N-acetylenolpyruvoylglucosamine reductase (345 aa).

One can recognise an FAD-binding PCMH-type domain in the interval Leu25–Ala193. Arg169 is a catalytic residue. Ser237 acts as the Proton donor in catalysis. Glu333 is an active-site residue.

Belongs to the MurB family. The cofactor is FAD.

It is found in the cytoplasm. The enzyme catalyses UDP-N-acetyl-alpha-D-muramate + NADP(+) = UDP-N-acetyl-3-O-(1-carboxyvinyl)-alpha-D-glucosamine + NADPH + H(+). The protein operates within cell wall biogenesis; peptidoglycan biosynthesis. Its function is as follows. Cell wall formation. The chain is UDP-N-acetylenolpyruvoylglucosamine reductase from Pseudoalteromonas atlantica (strain T6c / ATCC BAA-1087).